The primary structure comprises 57 residues: Small hydrophobic protein (57 aa).

Residues M1–L8 lie on the Virion surface side of the membrane. The helical transmembrane segment at Y9 to I29 threads the bilayer. Residues S30–L57 are Intravirion-facing.

Belongs to the rubulavirus small hydrophobic protein family. As to quaternary structure, interacts with host TNFRSF1A, RIPK1 and IRAK1; these interactions interfere with host NF-kappa-B activation at the level of receptor complexes. Interacts with host protein UBQLN4.

It is found in the virion membrane. The protein localises to the host cell membrane. Plays a role in the inhibition of the host NF-kappa-B pathway. This inhibition occurs at the receptor level, by preventing the signaling of TNFR1 as well as IL-1R and TLR3. The polypeptide is Small hydrophobic protein (SH) (Homo sapiens (Human)).